The sequence spans 219 residues: Guanylate kinase (219 aa).

Residues 15–194 (GLMFVLSSPS…AFAEVQSILK (180 aa)) enclose the Guanylate kinase-like domain. Position 22–29 (22–29 (SPSGAGKT)) interacts with ATP.

This sequence belongs to the guanylate kinase family.

It is found in the cytoplasm. The enzyme catalyses GMP + ATP = GDP + ADP. Functionally, essential for recycling GMP and indirectly, cGMP. This chain is Guanylate kinase, found in Bradyrhizobium diazoefficiens (strain JCM 10833 / BCRC 13528 / IAM 13628 / NBRC 14792 / USDA 110).